Here is a 257-residue protein sequence, read N- to C-terminus: Adenosylcobinamide-GDP ribazoletransferase (257 aa).

The next 6 helical transmembrane spans lie at 7 to 27, 39 to 59, 61 to 81, 113 to 133, 143 to 163, and 196 to 216; these read QLTLFFIAMGFFTRIPMPTWV, RYFGLIGLLVGGICALVYEIT, GFLPVSVSIIFAMIAGLVVTG, IGTYGALALVMGLMLKFILLS, VVTALIVGHTLSRVMAASLIF, and VLVLWCSGLSGGLYIAIGLVL.

It belongs to the CobS family. Mg(2+) serves as cofactor.

It localises to the cell inner membrane. It carries out the reaction alpha-ribazole + adenosylcob(III)inamide-GDP = adenosylcob(III)alamin + GMP + H(+). The enzyme catalyses alpha-ribazole 5'-phosphate + adenosylcob(III)inamide-GDP = adenosylcob(III)alamin 5'-phosphate + GMP + H(+). Its pathway is cofactor biosynthesis; adenosylcobalamin biosynthesis; adenosylcobalamin from cob(II)yrinate a,c-diamide: step 7/7. Its function is as follows. Joins adenosylcobinamide-GDP and alpha-ribazole to generate adenosylcobalamin (Ado-cobalamin). Also synthesizes adenosylcobalamin 5'-phosphate from adenosylcobinamide-GDP and alpha-ribazole 5'-phosphate. This chain is Adenosylcobinamide-GDP ribazoletransferase, found in Shewanella woodyi (strain ATCC 51908 / MS32).